A 366-amino-acid chain; its full sequence is Chorismate synthase (366 aa).

Positions 48 and 54 each coordinate NADP(+). FMN is bound by residues 125–127, 238–239, Gly-278, 293–297, and Arg-319; these read RSS, NA, and KPTSS.

This sequence belongs to the chorismate synthase family. Homotetramer. The cofactor is FMNH2.

It catalyses the reaction 5-O-(1-carboxyvinyl)-3-phosphoshikimate = chorismate + phosphate. It participates in metabolic intermediate biosynthesis; chorismate biosynthesis; chorismate from D-erythrose 4-phosphate and phosphoenolpyruvate: step 7/7. Catalyzes the anti-1,4-elimination of the C-3 phosphate and the C-6 proR hydrogen from 5-enolpyruvylshikimate-3-phosphate (EPSP) to yield chorismate, which is the branch point compound that serves as the starting substrate for the three terminal pathways of aromatic amino acid biosynthesis. This reaction introduces a second double bond into the aromatic ring system. This Neisseria meningitidis serogroup A / serotype 4A (strain DSM 15465 / Z2491) protein is Chorismate synthase.